We begin with the raw amino-acid sequence, 401 residues long: Elongation factor Tu (401 aa).

The tr-type G domain maps to 10–211; that stretch reads KPHLNVGTIG…ALDTFVPNPK (202 aa). Residues 19-26 are G1; the sequence is GHVDHGKT. Residue 19-26 participates in GTP binding; the sequence is GHVDHGKT. T26 serves as a coordination point for Mg(2+). A G2 region spans residues 62–66; that stretch reads GITIA. The segment at 83 to 86 is G3; sequence DCPG. GTP is bound by residues 83 to 87 and 138 to 141; these read DCPGH and NKAD. Residues 138 to 141 are G4; the sequence is NKAD. The G5 stretch occupies residues 179-181; that stretch reads SAV.

It belongs to the TRAFAC class translation factor GTPase superfamily. Classic translation factor GTPase family. EF-Tu/EF-1A subfamily. As to quaternary structure, monomer.

Its subcellular location is the cytoplasm. The catalysed reaction is GTP + H2O = GDP + phosphate + H(+). Functionally, GTP hydrolase that promotes the GTP-dependent binding of aminoacyl-tRNA to the A-site of ribosomes during protein biosynthesis. The protein is Elongation factor Tu of Leptospira interrogans serogroup Icterohaemorrhagiae serovar copenhageni (strain Fiocruz L1-130).